The following is a 98-amino-acid chain: Cell division protein FtsB (98 aa).

The Cytoplasmic segment spans residues 1–3 (MKR). The chain crosses the membrane as a helical span at residues 4–21 (LLIVLIALLAMLEYRLWF). Residues 22–98 (GDKSLAESFH…GGERDKPSND (77 aa)) lie on the Periplasmic side of the membrane. A coiled-coil region spans residues 31–74 (HLQEQIKLQQQSNAQLVARNQILREEISDLRSGTEALEERARNE).

It belongs to the FtsB family. As to quaternary structure, part of a complex composed of FtsB, FtsL and FtsQ.

It is found in the cell inner membrane. Its function is as follows. Essential cell division protein. May link together the upstream cell division proteins, which are predominantly cytoplasmic, with the downstream cell division proteins, which are predominantly periplasmic. The sequence is that of Cell division protein FtsB from Shewanella halifaxensis (strain HAW-EB4).